The chain runs to 125 residues: Small ribosomal subunit protein uS11 (125 aa).

Belongs to the universal ribosomal protein uS11 family. In terms of assembly, part of the 30S ribosomal subunit. Interacts with proteins S7 and S18. Binds to IF-3.

In terms of biological role, located on the platform of the 30S subunit, it bridges several disparate RNA helices of the 16S rRNA. Forms part of the Shine-Dalgarno cleft in the 70S ribosome. The chain is Small ribosomal subunit protein uS11 from Aquifex aeolicus (strain VF5).